A 632-amino-acid polypeptide reads, in one-letter code: 1-deoxy-D-xylulose-5-phosphate synthase (632 aa).

Residues histidine 77 and 118 to 120 (GHS) each bind thiamine diphosphate. Aspartate 149 contacts Mg(2+). Thiamine diphosphate contacts are provided by residues 150 to 151 (GA), asparagine 178, tyrosine 289, and glutamate 372. Asparagine 178 is a Mg(2+) binding site.

It belongs to the transketolase family. DXPS subfamily. As to quaternary structure, homodimer. It depends on Mg(2+) as a cofactor. Requires thiamine diphosphate as cofactor.

It carries out the reaction D-glyceraldehyde 3-phosphate + pyruvate + H(+) = 1-deoxy-D-xylulose 5-phosphate + CO2. The protein operates within metabolic intermediate biosynthesis; 1-deoxy-D-xylulose 5-phosphate biosynthesis; 1-deoxy-D-xylulose 5-phosphate from D-glyceraldehyde 3-phosphate and pyruvate: step 1/1. Functionally, catalyzes the acyloin condensation reaction between C atoms 2 and 3 of pyruvate and glyceraldehyde 3-phosphate to yield 1-deoxy-D-xylulose-5-phosphate (DXP). This chain is 1-deoxy-D-xylulose-5-phosphate synthase, found in Listeria innocua serovar 6a (strain ATCC BAA-680 / CLIP 11262).